Consider the following 148-residue polypeptide: Snaclec convulxin subunit beta (148 aa).

A signal peptide spans 1-23; it reads MGRFIFVSFGLLVVFLSLSGSEA. 3 disulfide bridges follow: Cys-27–Cys-38, Cys-55–Cys-144, and Cys-121–Cys-136. Residues 34–148 enclose the C-type lectin domain; that stretch reads YDRYCYKVFK…TYSFVCKFEA (115 aa).

It belongs to the snaclec family. In terms of assembly, tetramer of heterodimers of alpha and beta subunits (alphabeta)(4); disulfide-linked. In terms of tissue distribution, expressed by the venom gland.

The protein resides in the secreted. Functionally, snake venom lectin that activates platelets by binding to the platelet collagen receptor glycoprotein VI (GP6). The indirect activation of integrin alpha-IIb/beta-3 (ITGA2B/ITGB3) also induced by the toxin is upstream the cytoskeletal translocation of GPIb, FcRgamma (FCER1G) and 14-3-3zeta (YWHAZ). This Crotalus durissus terrificus (South American rattlesnake) protein is Snaclec convulxin subunit beta.